Here is an 879-residue protein sequence, read N- to C-terminus: Phosphoenolpyruvate carboxylase (879 aa).

Active-site residues include His-138 and Lys-546.

It belongs to the PEPCase type 1 family. The cofactor is Mg(2+).

It catalyses the reaction oxaloacetate + phosphate = phosphoenolpyruvate + hydrogencarbonate. Its function is as follows. Forms oxaloacetate, a four-carbon dicarboxylic acid source for the tricarboxylic acid cycle. This Pectobacterium carotovorum subsp. carotovorum (strain PC1) protein is Phosphoenolpyruvate carboxylase.